Here is a 317-residue protein sequence, read N- to C-terminus: 4-diphosphocytidyl-2-C-methyl-D-erythritol kinase (317 aa).

The active site involves K17. 109-119 (PVAGGMGGGSA) contributes to the ATP binding site. Residue D151 is part of the active site.

Belongs to the GHMP kinase family. IspE subfamily.

The catalysed reaction is 4-CDP-2-C-methyl-D-erythritol + ATP = 4-CDP-2-C-methyl-D-erythritol 2-phosphate + ADP + H(+). It functions in the pathway isoprenoid biosynthesis; isopentenyl diphosphate biosynthesis via DXP pathway; isopentenyl diphosphate from 1-deoxy-D-xylulose 5-phosphate: step 3/6. Its function is as follows. Catalyzes the phosphorylation of the position 2 hydroxy group of 4-diphosphocytidyl-2C-methyl-D-erythritol. This Paenarthrobacter aurescens (strain TC1) protein is 4-diphosphocytidyl-2-C-methyl-D-erythritol kinase.